Here is a 128-residue protein sequence, read N- to C-terminus: Glycine cleavage system H protein (128 aa).

The Lipoyl-binding domain maps to Ile25–Lys107. N6-lipoyllysine is present on Lys66.

It belongs to the GcvH family. In terms of assembly, the glycine cleavage system is composed of four proteins: P, T, L and H. (R)-lipoate serves as cofactor.

The glycine cleavage system catalyzes the degradation of glycine. The H protein shuttles the methylamine group of glycine from the P protein to the T protein. This chain is Glycine cleavage system H protein, found in Neisseria meningitidis serogroup A / serotype 4A (strain DSM 15465 / Z2491).